Reading from the N-terminus, the 568-residue chain is Kelch-like protein 12 (568 aa).

One can recognise a BTB domain in the interval 33 to 100; sequence CDVTLRVEQK…VYTETVHVTV (68 aa). A BACK domain is found at 135–236; it reads CLGIRDFAET…LTPRYITDVI (102 aa). 6 Kelch repeats span residues 282–329, 331–379, 380–426, 427–473, 474–520, and 522–567; these read VLLV…SLHD, IYVI…TLGD, MIYV…VASG, VIYC…LLND, HIYV…VLRG, and LYAI…ALRE.

In terms of assembly, component of the BCR(KLHL12) E3 ubiquitin ligase complex, at least composed of CUL3 and KLHL12 and RBX1. This complex interacts with DVL3 upon activation of the Wnt signaling pathway by WNT3A. Interacts with DRD4, KLHL2 and SEC31A. Interacts with PEF1 and PDCD6/ALG-2; interaction takes place in response to cytosolic calcium increase and leads to bridge together the BCR(KLHL12) complex and SEC31 (SEC31A or SEC31B). In terms of processing, ubiquitinated by the SCF(FBXL17) complex, leading to its degradation by the proteasome: ubiquitination by the SCF(FBXL17) complex takes place when aberrant BTB domain dimers are formed.

It is found in the cytoplasmic vesicle. Its subcellular location is the COPII-coated vesicle. The protein operates within protein modification; protein ubiquitination. Substrate-specific adapter of a BCR (BTB-CUL3-RBX1) E3 ubiquitin ligase complex that acts as a negative regulator of Wnt signaling pathway and ER-Golgi transport. The BCR(KLHL12) complex is involved in ER-Golgi transport by regulating the size of COPII coats, thereby playing a key role in collagen export, which is required for embryonic stem (ES) cells division: BCR(KLHL12) acts by mediating monoubiquitination of SEC31 (SEC31A or SEC31B). The BCR(KLHL12) complex is also involved in neural crest specification: in response to cytosolic calcium increase, interacts with the heterodimer formed with PEF1 and PDCD6/ALG-2, leading to bridge together the BCR(KLHL12) complex and SEC31 (SEC31A or SEC31B), promoting monoubiquitination of SEC31 and subsequent collagen export. As part of the BCR(KLHL12) complex, also acts as a negative regulator of the Wnt signaling pathway by mediating ubiquitination and subsequent proteolysis of DVL3. The BCR(KLHL12) complex also mediates polyubiquitination of DRD4 and PEF1, without leading to degradation of these proteins. The polypeptide is Kelch-like protein 12 (KLHL12) (Bos taurus (Bovine)).